Here is a 265-residue protein sequence, read N- to C-terminus: Cyclin-B2-5 (265 aa).

Belongs to the cyclin family. Cyclin AB subfamily.

The polypeptide is Cyclin-B2-5 (CYCB2-5) (Arabidopsis thaliana (Mouse-ear cress)).